Consider the following 311-residue polypeptide: Probable cell division protein WhiA (311 aa).

The segment at residues 277-311 (TLKEVADQIPDGPISKSGVNHRFKKLHEIAESLRE) is a DNA-binding region (H-T-H motif).

This sequence belongs to the WhiA family.

In terms of biological role, involved in cell division and chromosome segregation. The polypeptide is Probable cell division protein WhiA (Lactobacillus acidophilus (strain ATCC 700396 / NCK56 / N2 / NCFM)).